Reading from the N-terminus, the 556-residue chain is MKMEGTIKSPANYVPLTPISFLDRSAVVYADRVSIVYGSVKYTWRQTRDRCVRIASALSQLGISTGDVVSVLAPNVPAMVELHFGVPMAGALLCTLNIRHDSSLVAVLLRHSGTKVIFADHQFLQIAEGACEILSNKGDKVPILVLIPEPLTQSVSRKKRSEEMMEYEDVVAMGKSDFEVIRPTDECDAISVNYTSGTTSSPKGVVYSHRGAYLNSLAAVLLNEMHSSPTYLWTNPMFHCNGWCLLWGVTAIGGTNICLRNVTAKAIFDNISQHKVTHMGGAPTILNMIINAPESEQKPLPGKVSFITGAAPPPAHVIFKMEELGFSMFHSYGLTETYGPGTICTWKPEWDSLPREEQAKMKARQGVNHLGLEEIQVKDPVTMRTLPADGVTMGEVVFRGNTVMNGYLKNPEATKEAFKGGWFWSGDLGVKHPDGYIELKDRSKDIIISGGENISSIEVESTLFTHPCVLEAAVVARPDEYWGETACAFVKLKDGSKASAEELISYCRDRLPHYMAPRSIVFEDLPKTSTGKVQKFVLRTKAKALVSLSKKGRSKL.

The short motif at 554–556 (SKL) is the Microbody targeting signal element.

Belongs to the ATP-dependent AMP-binding enzyme family. Expressed in roots, leaves, stems, flowers and developing seeds.

It is found in the peroxisome. It carries out the reaction butanoate + ATP + CoA = butanoyl-CoA + AMP + diphosphate. It catalyses the reaction hexanoate + ATP + CoA = hexanoyl-CoA + AMP + diphosphate. The catalysed reaction is pentanoate + ATP + CoA = pentanoyl-CoA + AMP + diphosphate. The enzyme catalyses 4-methylpentanoate + ATP + CoA = 4-methylpentanoyl-CoA + AMP + diphosphate. Catalyzes the ligation of CoA on butanoate to produce butanoyl-CoA. Can also use hexanoate, pentanoate and 4-methylpentanoate as substrates with a lower efficiency. The sequence is that of Butanoate--CoA ligase AAE1 from Arabidopsis thaliana (Mouse-ear cress).